The sequence spans 421 residues: Testin (421 aa).

The region spanning 92-199 is the PET domain; sequence MILTNPVAAK…GDVKLPCEMD (108 aa). Residues 133-164 form a disordered region; that stretch reads EKQPVAGSEGAQYRKKQLAKQLPAHDQDPSKC. A compositionally biased stretch (basic and acidic residues) spans 155-164; it reads PAHDQDPSKC. LIM zinc-binding domains lie at 234–297, 299–359, and 362–421; these read YSCY…CDSE, PRCA…NHAV, and QGCH…KMMS.

It belongs to the prickle / espinas / testin family. As to quaternary structure, interacts via LIM domain 1 with ZYX. Interacts (via LIM domain 3) with ENAH and VASP. Interacts with ALKBH4, talin, actin, alpha-actinin, GRIP1 and PXN. Interacts (via LIM domain 2) with ACTL7A (via N-terminus). Heterodimer with ACTL7A; the heterodimer interacts with ENAH to form a heterotrimer.

Its subcellular location is the cytoplasm. It localises to the cell junction. It is found in the focal adhesion. In terms of biological role, scaffold protein that may play a role in cell adhesion, cell spreading and in the reorganization of the actin cytoskeleton. Plays a role in the regulation of cell proliferation. May act as a tumor suppressor. The chain is Testin (TES) from Callithrix jacchus (White-tufted-ear marmoset).